The sequence spans 199 residues: GTP cyclohydrolase-2 (199 aa).

49–53 contributes to the GTP binding site; that stretch reads RIHSE. Residues C54, C65, and C67 each contribute to the Zn(2+) site. Residues Q70, 92–94, and T114 each bind GTP; that span reads EGR. Catalysis depends on D126, which acts as the Proton acceptor. R128 serves as the catalytic Nucleophile. GTP is bound by residues T149 and K154.

Belongs to the GTP cyclohydrolase II family. As to quaternary structure, homodimer. Zn(2+) serves as cofactor.

The catalysed reaction is GTP + 4 H2O = 2,5-diamino-6-hydroxy-4-(5-phosphoribosylamino)-pyrimidine + formate + 2 phosphate + 3 H(+). Its pathway is cofactor biosynthesis; riboflavin biosynthesis; 5-amino-6-(D-ribitylamino)uracil from GTP: step 1/4. In terms of biological role, catalyzes the conversion of GTP to 2,5-diamino-6-ribosylamino-4(3H)-pyrimidinone 5'-phosphate (DARP), formate and pyrophosphate. This Proteus mirabilis (strain HI4320) protein is GTP cyclohydrolase-2.